Consider the following 726-residue polypeptide: Dipeptidyl-peptidase 5 (726 aa).

The signal sequence occupies residues 1–19 (MAAAKWLIASLAFASSGLA). N-linked (GlcNAc...) asparagine glycosylation is found at asparagine 96 and asparagine 252. A disordered region spans residues 269-291 (AEPINKRNGPRTPQAIEGASSSP). The active-site Charge relay system is the serine 558. Asparagine 605 carries N-linked (GlcNAc...) asparagine glycosylation. Residues aspartate 641 and histidine 673 each act as charge relay system in the active site. The N-linked (GlcNAc...) asparagine glycan is linked to asparagine 699.

The protein belongs to the peptidase S9C family.

It localises to the secreted. Its function is as follows. Extracellular dipeptidyl-peptidase which removes N-terminal dipeptides sequentially from polypeptides having unsubstituted N-termini. Contributes to pathogenicity. The protein is Dipeptidyl-peptidase 5 (DPP5) of Trichophyton equinum (Horse ringworm fungus).